The following is a 210-amino-acid chain: Protein GrpE (210 aa).

A disordered region spans residues 191–210 (KGGPKPAEAETNSVFDEKDA).

It belongs to the GrpE family. As to quaternary structure, homodimer.

The protein localises to the cytoplasm. In terms of biological role, participates actively in the response to hyperosmotic and heat shock by preventing the aggregation of stress-denatured proteins, in association with DnaK and GrpE. It is the nucleotide exchange factor for DnaK and may function as a thermosensor. Unfolded proteins bind initially to DnaJ; upon interaction with the DnaJ-bound protein, DnaK hydrolyzes its bound ATP, resulting in the formation of a stable complex. GrpE releases ADP from DnaK; ATP binding to DnaK triggers the release of the substrate protein, thus completing the reaction cycle. Several rounds of ATP-dependent interactions between DnaJ, DnaK and GrpE are required for fully efficient folding. This Rhizobium etli (strain CIAT 652) protein is Protein GrpE.